The primary structure comprises 62 residues: Large ribosomal subunit protein eL37 (62 aa).

Zn(2+) is bound by residues Cys20, Cys23, Cys35, and Cys38. A C4-type zinc finger spans residues 20-38; sequence CRRCGRHAFNVAKGYCAAC.

It belongs to the eukaryotic ribosomal protein eL37 family. The cofactor is Zn(2+).

Functionally, binds to the 23S rRNA. This Staphylothermus marinus (strain ATCC 43588 / DSM 3639 / JCM 9404 / F1) protein is Large ribosomal subunit protein eL37.